We begin with the raw amino-acid sequence, 435 residues long: S-locus-specific glycoprotein BS29-2 (435 aa).

The first 30 residues, 1 to 30, serve as a signal peptide directing secretion; that stretch reads MKGVGKPYENSHTSFLLVFFVLTLFSPAFS. The Bulb-type lectin domain occupies 33–155; it reads TLSSIESLKI…NKNDRSGFLW (123 aa). N-linked (GlcNAc...) asparagine glycans are attached at residues N113, N120, N244, N260, and N389. The 81-residue stretch at 350 to 430 folds into the PAN domain; that stretch reads CSGDGFTRMK…NGQDLYVRLA (81 aa). 2 disulfides stabilise this stretch: C380/C405 and C388/C390.

Stigma.

Involved in sporophytic self-incompatibility system (the inability of flowering plants to achieve self-fertilization). The protein is S-locus-specific glycoprotein BS29-2 (SLSG) of Brassica oleracea var. alboglabra (Chinese kale).